The primary structure comprises 126 residues: C-type natriuretic peptide (126 aa).

Positions 1 to 23 are cleaved as a signal peptide; that stretch reads MHLSQLLACALLLALLSLRPSEA. The disordered stretch occupies residues 20–71; that stretch reads PSEAKPGAPPKVPRTPSGEEVAEPQAAGGGQKKGDKTPGGGGANLKDDRSRL. The propeptide occupies 24-73; that stretch reads KPGAPPKVPRTPSGEEVAEPQAAGGGQKKGDKTPGGGGANLKDDRSRLLR. The span at 46 to 62 shows a compositional bias: gly residues; sequence AGGGQKKGDKTPGGGGA. A disulfide bond links cysteine 110 and cysteine 126.

Belongs to the natriuretic peptide family. In terms of processing, degraded by IDE (in vitro).

The protein localises to the secreted. Functionally, hormone which plays a role in endochondral ossification through regulation of cartilaginous growth plate chondrocytes proliferation and differentiation. May also be vasoactive and natriuretic. Acts by specifically binding and stimulating NPR2 to produce cGMP. Binds the clearance receptor NPR3. The polypeptide is C-type natriuretic peptide (NPPC) (Bos taurus (Bovine)).